Consider the following 493-residue polypeptide: EGF-containing fibulin-like extracellular matrix protein 1 (493 aa).

Residues 1 to 17 (MLQTVFLTMLTLALVKS) form the signal peptide. In terms of domain architecture, EGF-like 1; atypical spans 26 to 71 (YTQCTDGYEWDPVRQQCKDIDECDIVPDACKGGMKCVNHYGGYLCL). Positions 173-213 (DIDECTSGTHNCRLDQVCINLRGSFTCHCLPGYQKRGEQCV) constitute an EGF-like 2; calcium-binding domain. Intrachain disulfides connect Cys177-Cys190, Cys184-Cys199, Cys201-Cys212, Cys218-Cys228, Cys224-Cys237, Cys239-Cys252, Cys258-Cys268, Cys264-Cys277, Cys279-Cys292, Cys298-Cys309, Cys305-Cys318, Cys320-Cys332, Cys338-Cys350, Cys344-Cys359, and Cys365-Cys377. The 40-residue stretch at 214–253 (DIDECSVPPYCHQGCVNTPGSFYCQCNPGFQLAANNYTCV) folds into the EGF-like 3; calcium-binding domain. Asn249 carries an N-linked (GlcNAc...) asparagine glycan. Residues 254-293 (DINECDASNQCAQQCYNILGSFICQCNQGYELSSDRLNCE) enclose the EGF-like 4; calcium-binding domain. Residues 259–493 (DASNQCAQQC…LTIIVGPFSF (235 aa)) form a mediates interaction with TIMP3 region. Residues 294-333 (DIDECRTSSYLCQYQCVNEPGKFSCMCPQGYQVVRSRTCQ) form the EGF-like 5; calcium-binding domain. One can recognise an EGF-like 6; calcium-binding domain in the interval 334–378 (DINECETTNECREDEMCWNYHGGFRCYPQNPCQDPYVLTSENRCV).

This sequence belongs to the fibulin family. As to quaternary structure, interacts with ECM1. Interacts with TIMP3. In terms of tissue distribution, expressed by olfactory ensheathing cells (at protein level). Detected in lung, intestine and kidney.

It is found in the secreted. The protein resides in the extracellular space. The protein localises to the extracellular matrix. Functionally, binds EGFR, the EGF receptor, inducing EGFR autophosphorylation and the activation of downstream signaling pathways. May play a role in cell adhesion and migration. May function as a negative regulator of chondrocyte differentiation. In the olfactory epithelium, it may regulate glial cell migration, differentiation and the ability of glial cells to support neuronal neurite outgrowth. This Rattus norvegicus (Rat) protein is EGF-containing fibulin-like extracellular matrix protein 1 (Efemp1).